The chain runs to 314 residues: Mitochondrial RNA-splicing protein MRS3 (314 aa).

3 Solcar repeats span residues alanine 31–asparagine 118, histidine 128–phenylalanine 210, and tyrosine 217–phenylalanine 310. The next 6 membrane-spanning stretches (helical) occupy residues leucine 33–phenylalanine 52, glycine 93–tyrosine 112, proline 130–asparagine 149, serine 185–tyrosine 204, proline 219–threonine 238, and glycine 285–alanine 298.

The protein belongs to the mitochondrial carrier (TC 2.A.29) family.

The protein localises to the mitochondrion inner membrane. In terms of biological role, MRS3 suppresses a mitochondrial splice defect in the first intron of the COB gene. It may act as a carrier, exerting its suppressor activity via modulation of solute concentrations in the mitochondrion (possibly of cations). This Saccharomyces cerevisiae (strain ATCC 204508 / S288c) (Baker's yeast) protein is Mitochondrial RNA-splicing protein MRS3 (MRS3).